The chain runs to 143 residues: FAD synthase (143 aa).

Residues 9 to 10 (TF), 14 to 17 (HPGH), and Asp-92 contribute to the ATP site.

The protein belongs to the archaeal FAD synthase family. As to quaternary structure, homodimer. It depends on a divalent metal cation as a cofactor.

It catalyses the reaction FMN + ATP + H(+) = FAD + diphosphate. Its pathway is cofactor biosynthesis; FAD biosynthesis; FAD from FMN: step 1/1. Functionally, catalyzes the transfer of the AMP portion of ATP to flavin mononucleotide (FMN) to produce flavin adenine dinucleotide (FAD) coenzyme. The protein is FAD synthase of Methanococcoides burtonii (strain DSM 6242 / NBRC 107633 / OCM 468 / ACE-M).